Here is a 255-residue protein sequence, read N- to C-terminus: DNA repair protein RecO (255 aa).

It belongs to the RecO family.

In terms of biological role, involved in DNA repair and RecF pathway recombination. This Listeria welshimeri serovar 6b (strain ATCC 35897 / DSM 20650 / CCUG 15529 / CIP 8149 / NCTC 11857 / SLCC 5334 / V8) protein is DNA repair protein RecO.